A 212-amino-acid chain; its full sequence is RNA chaperone ProQ (212 aa).

The tract at residues 114–149 (RIAKAGKTSAPAANAKKPVKKPVARRPKAAPSAKPV) is disordered. Residues 118 to 129 (AGKTSAPAANAK) are compositionally biased toward low complexity. The span at 130–141 (KPVKKPVARRPK) shows a compositional bias: basic residues.

It belongs to the ProQ family.

The protein resides in the cytoplasm. Functionally, RNA chaperone with significant RNA binding, RNA strand exchange and RNA duplexing activities. In Shewanella piezotolerans (strain WP3 / JCM 13877), this protein is RNA chaperone ProQ.